Consider the following 196-residue polypeptide: Probable malonic semialdehyde reductase RutE (196 aa).

Belongs to the nitroreductase family. HadB/RutE subfamily. FMN serves as cofactor.

It catalyses the reaction 3-hydroxypropanoate + NADP(+) = 3-oxopropanoate + NADPH + H(+). Functionally, may reduce toxic product malonic semialdehyde to 3-hydroxypropionic acid, which is excreted. The chain is Probable malonic semialdehyde reductase RutE from Escherichia coli O6:H1 (strain CFT073 / ATCC 700928 / UPEC).